The primary structure comprises 230 residues: Large ribosomal subunit protein uL1 (230 aa).

Belongs to the universal ribosomal protein uL1 family. As to quaternary structure, part of the 50S ribosomal subunit.

In terms of biological role, binds directly to 23S rRNA. The L1 stalk is quite mobile in the ribosome, and is involved in E site tRNA release. Its function is as follows. Protein L1 is also a translational repressor protein, it controls the translation of the L11 operon by binding to its mRNA. This chain is Large ribosomal subunit protein uL1, found in Nitrosospira multiformis (strain ATCC 25196 / NCIMB 11849 / C 71).